The primary structure comprises 390 residues: NADH-quinone oxidoreductase subunit D (390 aa).

This sequence belongs to the complex I 49 kDa subunit family. As to quaternary structure, NDH-1 is composed of 14 different subunits. Subunits NuoB, C, D, E, F, and G constitute the peripheral sector of the complex.

It localises to the cell inner membrane. The catalysed reaction is a quinone + NADH + 5 H(+)(in) = a quinol + NAD(+) + 4 H(+)(out). Functionally, NDH-1 shuttles electrons from NADH, via FMN and iron-sulfur (Fe-S) centers, to quinones in the respiratory chain. The immediate electron acceptor for the enzyme in this species is believed to be ubiquinone. Couples the redox reaction to proton translocation (for every two electrons transferred, four hydrogen ions are translocated across the cytoplasmic membrane), and thus conserves the redox energy in a proton gradient. This Trichlorobacter lovleyi (strain ATCC BAA-1151 / DSM 17278 / SZ) (Geobacter lovleyi) protein is NADH-quinone oxidoreductase subunit D.